Reading from the N-terminus, the 1175-residue chain is MWRWVRQQLGFDPPHQSDTRTIYIANRFPQNGLYTPQKFIDNRIISSKYTIWNFVPKNLFEQFRRVANFYFLIIFLVQLMIDTPTSPITSGLPLFFVITVTAIKQGYEDWLRHNSDNEVNGAPVYVVRSGGLVKTRSKNIRVGDIVRIAKDEIFPADLVLLSSDRLDGSCHVTTASLDGETNLKTHVSVPETAVLQTVANLDSLIAVIECQQPEADLYRFMGRMIITQQMEEIVRPLGPESLLLRGARLKNTKEIFGVAVYTGMETKMALNYKSKSQKRSAVEKSMNTFLIIYLIILISEAIISTILKYTWQAEEKWDEPWYNQKTEHQRNSSKILRFISDFLAFLVLYNFIIPISLYVTVEMQKFLGSFFIGWDLDLYHEESDQKAQVNTSDLNEELGQVEYVFTDKTGTLTENEMQFRECSINGLKYQEINGKLVPEGPSPDSTEGEVPFLGSLSHLSNSAHLTATSLRTSPESETELIKEHDLFFKAVSLCHTVQISNVQTDGIGDGPWQPNLAPAQLEYYASSPDEKALVEAAARAGIIFVGISEETMEVKVLGRLERYKLLHILEFDSDRRRMSVIVQAPSGEKLLFAKGAESSILPKCIGGEIAKTRIHVDEFALKGLRTLCIAYRQFTAKEYEDVDRRLFEARTALQHREEKLADAFQYIEKDLILLGATAVEDRLQDKVRETIEALRMAGIKVWVLTGDKHETAVSVSLSCGHFHRTMNILELINQKSDSGCAEQLRQLARRITEDHVIQHGLVVDGTSLSLALREHEKLFMEVCRNCSAVLCCRMAPLQKAKVIRLIKISPEKPITLAVGDGANDVSMIQEAHVGIGIMGKEGRQAARNSDYAIARFKFLSKLLFVHGHFYYIRIATLVQYFFYKNVCFITPQFLYQFYCLFSQQTLYDSVYLTLYNICFTSLPVLIYSLVEQHIDPHVLQSKPTLYRDISKNGLLSIKAFLYWTVLGFSHAFIFFFGSYFLVGKDTSLLGNGQMFGNWTFGTLVFTVMVITVTVKMALETHFWTWINHLVTWGSIIFYFIFSLFYGGILWPFLGSQNMYFVFIQLLSSGSAWFAILLMVVTCLFIDVVKKVFDRQLHPTSTEKAQLAEAHSSVKCLDSVCCFPGETPCASVGRMLERVIGRCSPNHISRLWNASDPFYTNDRSILTLSPMDSSTC.

The next 4 helical transmembrane spans lie at 69–89 (FYFL…SPIT), 91–111 (GLPL…EDWL), 287–307 (NTFL…STIL), and 338–358 (FISD…ISLY). Asp407 serves as the catalytic 4-aspartylphosphate intermediate. Residues Asp407, Lys408, Thr409, Glu530, Phe571, Lys594, Arg625, Thr705, Gly706, Asp707, Arg793, and Lys799 each coordinate ATP. Asp407 contributes to the Mg(2+) binding site. A Mg(2+)-binding site is contributed by Thr409. Position 820 (Asp820) interacts with Mg(2+). Residues Asn823 and Asp824 each coordinate ATP. Asp824 contributes to the Mg(2+) binding site. Helical transmembrane passes span 862 to 882 (LLFV…QYFF), 910 to 930 (VYLT…YSLV), 963 to 983 (WTVL…FLVG), 994 to 1014 (MFGN…TVTV), 1033 to 1053 (GSII…WPFL), and 1060 to 1080 (FVFI…LMVV).

This sequence belongs to the cation transport ATPase (P-type) (TC 3.A.3) family. Type IV subfamily. In terms of assembly, component of a P4-ATPase flippase complex which consists of a catalytic alpha subunit ATP11B and an accessory beta subunit TMEM30A. Mg(2+) serves as cofactor. Expressed in retina, brain, liver, testes and kidney (at protein level).

Its subcellular location is the recycling endosome membrane. The protein resides in the early endosome. It localises to the endoplasmic reticulum. The protein localises to the golgi apparatus. It is found in the trans-Golgi network. The catalysed reaction is ATP + H2O + phospholipidSide 1 = ADP + phosphate + phospholipidSide 2.. It carries out the reaction a 1,2-diacyl-sn-glycero-3-phospho-L-serine(out) + ATP + H2O = a 1,2-diacyl-sn-glycero-3-phospho-L-serine(in) + ADP + phosphate + H(+). It catalyses the reaction a 1,2-diacyl-sn-glycero-3-phosphoethanolamine(out) + ATP + H2O = a 1,2-diacyl-sn-glycero-3-phosphoethanolamine(in) + ADP + phosphate + H(+). Functionally, catalytic component of a P4-ATPase flippase complex which catalyzes the hydrolysis of ATP coupled to the transport of aminophospholipids, phosphatidylserines (PS) and phosphatidylethanolamines (PE), from the outer to the inner leaflet of intracellular membranes. May contribute to the maintenance of membrane lipid asymmetry in endosome compartment. In Mus musculus (Mouse), this protein is Phospholipid-transporting ATPase IF.